A 162-amino-acid chain; its full sequence is Interleukin-15 (162 aa).

A signal peptide spans Met-1–Ala-29. Residues Gly-30–Ala-48 constitute a propeptide that is removed on maturation. 2 cysteine pairs are disulfide-bonded: Cys-83–Cys-133 and Cys-90–Cys-136. N-linked (GlcNAc...) asparagine glycosylation is found at Asn-108, Asn-119, Asn-127, and Asn-143.

This sequence belongs to the IL-15/IL-21 family. As to expression, expressed in many tissues including heart, spleen, lung, liver, muscle and kidney (at mRNA level). Expressed in many tissues including heart, spleen, lung, liver, muscle and kidney (at protein level).

The protein localises to the secreted. Functionally, cytokine that plays a major role in the development of inflammatory and protective immune responses to microbial invaders and parasites by modulating immune cells of both the innate and adaptive immune systems. Stimulates the proliferation of natural killer cells, T-cells and B-cells and promotes the secretion of several cytokines. In monocytes, induces the production of IL8 and monocyte chemotactic protein 1/CCL2, two chemokines that attract neutrophils and monocytes respectively to sites of infection. Unlike most cytokines, which are secreted in soluble form, IL15 is expressed in association with its high affinity IL15RA on the surface of IL15-producing cells and delivers signals to target cells that express IL2RB and IL2RG receptor subunits. Binding to its receptor triggers the phosphorylation of JAK1 and JAK3 and the recruitment and subsequent phosphorylation of signal transducer and activator of transcription-3/STAT3 and STAT5. In mast cells, induces the rapid tyrosine phosphorylation of STAT6 and thereby controls mast cell survival and release of cytokines such as IL4. In Oryctolagus cuniculus (Rabbit), this protein is Interleukin-15 (IL15).